The chain runs to 383 residues: Queuine tRNA-ribosyltransferase (383 aa).

Asp90 functions as the Proton acceptor in the catalytic mechanism. Substrate-binding positions include 90 to 94 (DSGGF), Asp144, Gln193, and Gly227. Positions 258–264 (GVGTPED) are RNA binding. Residue Asp277 is the Nucleophile of the active site. Residues 282–286 (TRNAR) form an RNA binding; important for wobble base 34 recognition region. Cys315, Cys317, Cys320, and His346 together coordinate Zn(2+).

The protein belongs to the queuine tRNA-ribosyltransferase family. As to quaternary structure, homodimer. Within each dimer, one monomer is responsible for RNA recognition and catalysis, while the other monomer binds to the replacement base PreQ1. It depends on Zn(2+) as a cofactor.

The catalysed reaction is 7-aminomethyl-7-carbaguanine + guanosine(34) in tRNA = 7-aminomethyl-7-carbaguanosine(34) in tRNA + guanine. It participates in tRNA modification; tRNA-queuosine biosynthesis. In terms of biological role, catalyzes the base-exchange of a guanine (G) residue with the queuine precursor 7-aminomethyl-7-deazaguanine (PreQ1) at position 34 (anticodon wobble position) in tRNAs with GU(N) anticodons (tRNA-Asp, -Asn, -His and -Tyr). Catalysis occurs through a double-displacement mechanism. The nucleophile active site attacks the C1' of nucleotide 34 to detach the guanine base from the RNA, forming a covalent enzyme-RNA intermediate. The proton acceptor active site deprotonates the incoming PreQ1, allowing a nucleophilic attack on the C1' of the ribose to form the product. After dissociation, two additional enzymatic reactions on the tRNA convert PreQ1 to queuine (Q), resulting in the hypermodified nucleoside queuosine (7-(((4,5-cis-dihydroxy-2-cyclopenten-1-yl)amino)methyl)-7-deazaguanosine). The protein is Queuine tRNA-ribosyltransferase of Ralstonia nicotianae (strain ATCC BAA-1114 / GMI1000) (Ralstonia solanacearum).